The primary structure comprises 37 residues: Photosystem I reaction center subunit IX (37 aa).

A helical membrane pass occupies residues 4-24; sequence FLSSAPVLLTAMMVFTAGLLI.

The protein belongs to the PsaJ family.

It localises to the cellular thylakoid membrane. May help in the organization of the PsaE and PsaF subunits. This chain is Photosystem I reaction center subunit IX, found in Picosynechococcus sp. (strain ATCC 27264 / PCC 7002 / PR-6) (Agmenellum quadruplicatum).